Consider the following 131-residue polypeptide: MLIGVGTDIVQISRIEKILHLYPELFAKKILTSKELKQFALLGKINHAAFLAKRFAAKEAVSKAFGVGIGQGINFKDITILNNDLGKPIVEVSSNYTNKLSPFNIHLSLADDYPVCVAFAVIESSYNVIRG.

D8 and E59 together coordinate Mg(2+).

It belongs to the P-Pant transferase superfamily. AcpS family. Mg(2+) serves as cofactor.

It localises to the cytoplasm. It carries out the reaction apo-[ACP] + CoA = holo-[ACP] + adenosine 3',5'-bisphosphate + H(+). Transfers the 4'-phosphopantetheine moiety from coenzyme A to a Ser of acyl-carrier-protein. This is Holo-[acyl-carrier-protein] synthase from Rickettsia rickettsii (strain Sheila Smith).